We begin with the raw amino-acid sequence, 60 residues long: Large ribosomal subunit protein bL32 (60 aa).

A disordered region spans residues 1–60; it reads MAVQQNKKSPSKRGMHRSHDFLVNPSTAIEPTTGETHLRHHISPNGFYRGRKVLKTKADE. A compositionally biased stretch (polar residues) spans 24-35; sequence NPSTAIEPTTGE. The segment covering 49 to 60 has biased composition (basic residues); it reads RGRKVLKTKADE.

This sequence belongs to the bacterial ribosomal protein bL32 family.

This is Large ribosomal subunit protein bL32 from Bordetella petrii (strain ATCC BAA-461 / DSM 12804 / CCUG 43448).